The primary structure comprises 745 residues: Jacalin-related lectin 4 (745 aa).

Jacalin-type lectin domains follow at residues 2 to 148, 151 to 294, 307 to 448, 451 to 594, and 601 to 744; these read AQKL…YFAP, PTKF…YFSP, AEKL…YFVT, PTKF…YFSR, and AETL…YVMP.

The protein belongs to the jacalin lectin family.

This chain is Jacalin-related lectin 4 (JAL4), found in Arabidopsis thaliana (Mouse-ear cress).